Reading from the N-terminus, the 364-residue chain is Chorismate synthase (364 aa).

Position 47 (R47) interacts with NADP(+). Residues 125-127 (RAS), G288, 303-307 (KPTAT), and R329 contribute to the FMN site.

Belongs to the chorismate synthase family. As to quaternary structure, homotetramer. FMNH2 serves as cofactor.

It carries out the reaction 5-O-(1-carboxyvinyl)-3-phosphoshikimate = chorismate + phosphate. The protein operates within metabolic intermediate biosynthesis; chorismate biosynthesis; chorismate from D-erythrose 4-phosphate and phosphoenolpyruvate: step 7/7. In terms of biological role, catalyzes the anti-1,4-elimination of the C-3 phosphate and the C-6 proR hydrogen from 5-enolpyruvylshikimate-3-phosphate (EPSP) to yield chorismate, which is the branch point compound that serves as the starting substrate for the three terminal pathways of aromatic amino acid biosynthesis. This reaction introduces a second double bond into the aromatic ring system. This is Chorismate synthase from Synechococcus sp. (strain CC9902).